The chain runs to 157 residues: Class-10 pathogenesis-related protein 1 (157 aa).

This sequence belongs to the BetVI family. Expressed in roots. Detected in nodules and leaves, but not in stems and flowers.

This is Class-10 pathogenesis-related protein 1 (PR10-1) from Medicago truncatula (Barrel medic).